A 365-amino-acid polypeptide reads, in one-letter code: S-adenosylmethionine:tRNA ribosyltransferase-isomerase (365 aa).

This sequence belongs to the QueA family. As to quaternary structure, monomer.

It is found in the cytoplasm. It carries out the reaction 7-aminomethyl-7-carbaguanosine(34) in tRNA + S-adenosyl-L-methionine = epoxyqueuosine(34) in tRNA + adenine + L-methionine + 2 H(+). The protein operates within tRNA modification; tRNA-queuosine biosynthesis. Transfers and isomerizes the ribose moiety from AdoMet to the 7-aminomethyl group of 7-deazaguanine (preQ1-tRNA) to give epoxyqueuosine (oQ-tRNA). This Rickettsia africae (strain ESF-5) protein is S-adenosylmethionine:tRNA ribosyltransferase-isomerase.